Reading from the N-terminus, the 238-residue chain is tRNA (guanine-N(7)-)-methyltransferase (238 aa).

A compositionally biased stretch (polar residues) spans 1–12; the sequence is MTDTAENQTPND. The segment at 1–20 is disordered; sequence MTDTAENQTPNDRQAGHPRS. E70, D95, D122, and D145 together coordinate S-adenosyl-L-methionine. Residue D145 is part of the active site. Residues K149, D181, and 216-219 contribute to the substrate site; that span reads TKFE.

It belongs to the class I-like SAM-binding methyltransferase superfamily. TrmB family.

The enzyme catalyses guanosine(46) in tRNA + S-adenosyl-L-methionine = N(7)-methylguanosine(46) in tRNA + S-adenosyl-L-homocysteine. The protein operates within tRNA modification; N(7)-methylguanine-tRNA biosynthesis. Functionally, catalyzes the formation of N(7)-methylguanine at position 46 (m7G46) in tRNA. The polypeptide is tRNA (guanine-N(7)-)-methyltransferase (Neisseria meningitidis serogroup C (strain 053442)).